Reading from the N-terminus, the 382-residue chain is Carbamoyl phosphate synthase small chain (382 aa).

Residues 1–187 (MPTPALLVLA…EFRPQTATEE (187 aa)) are CPSase. 3 residues coordinate L-glutamine: serine 47, glycine 239, and glycine 241. In terms of domain architecture, Glutamine amidotransferase type-1 spans 191–377 (TVVAIDFGVK…VAQMRAYRQQ (187 aa)). Catalysis depends on cysteine 267, which acts as the Nucleophile. Positions 268, 271, 307, 309, and 310 each coordinate L-glutamine. Residues histidine 350 and glutamate 352 contribute to the active site.

It belongs to the CarA family. Composed of two chains; the small (or glutamine) chain promotes the hydrolysis of glutamine to ammonia, which is used by the large (or ammonia) chain to synthesize carbamoyl phosphate. Tetramer of heterodimers (alpha,beta)4.

The catalysed reaction is hydrogencarbonate + L-glutamine + 2 ATP + H2O = carbamoyl phosphate + L-glutamate + 2 ADP + phosphate + 2 H(+). It catalyses the reaction L-glutamine + H2O = L-glutamate + NH4(+). It functions in the pathway amino-acid biosynthesis; L-arginine biosynthesis; carbamoyl phosphate from bicarbonate: step 1/1. Its pathway is pyrimidine metabolism; UMP biosynthesis via de novo pathway; (S)-dihydroorotate from bicarbonate: step 1/3. Functionally, small subunit of the glutamine-dependent carbamoyl phosphate synthetase (CPSase). CPSase catalyzes the formation of carbamoyl phosphate from the ammonia moiety of glutamine, carbonate, and phosphate donated by ATP, constituting the first step of 2 biosynthetic pathways, one leading to arginine and/or urea and the other to pyrimidine nucleotides. The small subunit (glutamine amidotransferase) binds and cleaves glutamine to supply the large subunit with the substrate ammonia. In Thermosynechococcus vestitus (strain NIES-2133 / IAM M-273 / BP-1), this protein is Carbamoyl phosphate synthase small chain.